The sequence spans 660 residues: DNA ligase (660 aa).

NAD(+)-binding positions include 33 to 37 (DFVYD), 82 to 83 (SL), and Glu110. Lys112 acts as the N6-AMP-lysine intermediate in catalysis. Residues Arg133, Glu167, Lys281, and Lys305 each coordinate NAD(+). Cys396, Cys399, Cys412, and Cys417 together coordinate Zn(2+). A BRCT domain is found at 583-660 (DENRLLAGKK…SFEDIKSYLN (78 aa)).

This sequence belongs to the NAD-dependent DNA ligase family. LigA subfamily. The cofactor is Mg(2+). Mn(2+) is required as a cofactor.

The catalysed reaction is NAD(+) + (deoxyribonucleotide)n-3'-hydroxyl + 5'-phospho-(deoxyribonucleotide)m = (deoxyribonucleotide)n+m + AMP + beta-nicotinamide D-nucleotide.. DNA ligase that catalyzes the formation of phosphodiester linkages between 5'-phosphoryl and 3'-hydroxyl groups in double-stranded DNA using NAD as a coenzyme and as the energy source for the reaction. It is essential for DNA replication and repair of damaged DNA. In Borrelia garinii subsp. bavariensis (strain ATCC BAA-2496 / DSM 23469 / PBi) (Borreliella bavariensis), this protein is DNA ligase.